Here is a 137-residue protein sequence, read N- to C-terminus: Large ribosomal subunit protein uL16 (137 aa).

Belongs to the universal ribosomal protein uL16 family. In terms of assembly, part of the 50S ribosomal subunit.

Binds 23S rRNA and is also seen to make contacts with the A and possibly P site tRNAs. The protein is Large ribosomal subunit protein uL16 of Hydrogenovibrio crunogenus (strain DSM 25203 / XCL-2) (Thiomicrospira crunogena).